Here is a 177-residue protein sequence, read N- to C-terminus: MDFHGTTVLCVKRNDSVIIASDGQVTMGNTVLKHNAKKIRKLYNGQVLTGFAGSTADAFTLFERFEGKLETYKGNLLRAAVELAKDWRTDKILRRLEALLIVADKEHILIISGNGDVIEPEDQVAAIGSGGPFAFAAAKALYDNTELPAKEIAIKAMEIASKICIYTNNIIITEELS.

Residue Thr-6 is part of the active site. 3 residues coordinate Na(+): Ser-161, Cys-164, and Thr-167.

It belongs to the peptidase T1B family. HslV subfamily. A double ring-shaped homohexamer of HslV is capped on each side by a ring-shaped HslU homohexamer. The assembly of the HslU/HslV complex is dependent on binding of ATP.

The protein localises to the cytoplasm. The catalysed reaction is ATP-dependent cleavage of peptide bonds with broad specificity.. With respect to regulation, allosterically activated by HslU binding. Its function is as follows. Protease subunit of a proteasome-like degradation complex believed to be a general protein degrading machinery. This Thermodesulfovibrio yellowstonii (strain ATCC 51303 / DSM 11347 / YP87) protein is ATP-dependent protease subunit HslV.